A 173-amino-acid polypeptide reads, in one-letter code: uncharacterized protein (173 aa).

Disordered stretches follow at residues 1–23 (MGDL…GDVA) and 48–173 (TGAA…APQR). Over residues 49-60 (GAAPGSAQAGPP) the composition is skewed to low complexity. Pro residues predominate over residues 70–83 (PRGPQAPPRLPPSL). The segment covering 123–136 (PACAGSSAPGSPAA) has biased composition (low complexity).

This is an uncharacterized protein from Homo sapiens (Human).